A 376-amino-acid chain; its full sequence is Mitogen-activated protein kinase ERK-A (376 aa).

The region spanning 38-326 (YIKLAYIGEG…VEEALAHPYL (289 aa)) is the Protein kinase domain. ATP is bound by residues 44-52 (IGEGAYGMV) and K67. The active-site Proton acceptor is D162. T198 carries the phosphothreonine modification. The TXY motif lies at 198 to 200 (TEY). Y200 bears the Phosphotyrosine mark.

Belongs to the protein kinase superfamily. CMGC Ser/Thr protein kinase family. MAP kinase subfamily. Requires Mg(2+) as cofactor. In terms of processing, dually phosphorylated on Thr-198 and Tyr-200, which activates the enzyme. Phosphorylated on tyrosine residue(s) in response to insulin. In terms of tissue distribution, in third instar larvae, expressed in eye imaginal disks. In adults, expressed in head and body.

The protein localises to the cytoplasm. The protein resides in the nucleus. The catalysed reaction is L-seryl-[protein] + ATP = O-phospho-L-seryl-[protein] + ADP + H(+). The enzyme catalyses L-threonyl-[protein] + ATP = O-phospho-L-threonyl-[protein] + ADP + H(+). With respect to regulation, activated by tyrosine and threonine phosphorylation. Its function is as follows. Serine/threonine kinase which acts as an essential component of the MAP kinase signal transduction pathway to regulate proliferation, differentiation and effect cell fate decisions in various tissues. Required downstream of phl/Raf in the sev/sevenless, tor/torso, and EGF receptor homolog Egfr signal transduction pathways. Required for embryonic epithelial tissue repair. During larval development, mediates Ptth/tor signaling leading to the production of ecdysone, a hormone required for the initiation of metamorphosis. This Drosophila melanogaster (Fruit fly) protein is Mitogen-activated protein kinase ERK-A.